The chain runs to 494 residues: Glycerol kinase (494 aa).

Residue T12 participates in ADP binding. T12, T13, and S14 together coordinate ATP. T12 contributes to the sn-glycerol 3-phosphate binding site. R16 contacts ADP. Positions 82, 83, 134, and 241 each coordinate sn-glycerol 3-phosphate. Glycerol contacts are provided by R82, E83, Y134, D241, and Q242. Residues T263 and G306 each coordinate ADP. ATP contacts are provided by T263, G306, Q310, and G407. Position 407 (G407) interacts with ADP.

It belongs to the FGGY kinase family.

It catalyses the reaction glycerol + ATP = sn-glycerol 3-phosphate + ADP + H(+). Its pathway is polyol metabolism; glycerol degradation via glycerol kinase pathway; sn-glycerol 3-phosphate from glycerol: step 1/1. Its activity is regulated as follows. Inhibited by fructose 1,6-bisphosphate (FBP). Functionally, key enzyme in the regulation of glycerol uptake and metabolism. Catalyzes the phosphorylation of glycerol to yield sn-glycerol 3-phosphate. In Brachyspira hyodysenteriae (strain ATCC 49526 / WA1), this protein is Glycerol kinase.